The sequence spans 467 residues: Probable Xaa-Pro aminopeptidase SMAC_04549 (467 aa).

Aspartate 263, aspartate 274, glutamate 397, and glutamate 437 together coordinate Mn(2+).

This sequence belongs to the peptidase M24B family. The cofactor is Mn(2+).

The enzyme catalyses Release of any N-terminal amino acid, including proline, that is linked to proline, even from a dipeptide or tripeptide.. Catalyzes the removal of a penultimate prolyl residue from the N-termini of peptides. In Sordaria macrospora (strain ATCC MYA-333 / DSM 997 / K(L3346) / K-hell), this protein is Probable Xaa-Pro aminopeptidase SMAC_04549.